A 223-amino-acid polypeptide reads, in one-letter code: MKVAILTDGVYGDRAYNTIKSKFPCDFITVKYYGDFDEITISENTIEKLKDYDLFITYTLNPDLTYELVRKIKELNNKAFVLVGAWKGEGFKKQIESFGNAFCPYLMCDIDEDELKDYKDYLDNYPHLKEFLKYFGKPKVKLYIKNNKIEKIDVLREAPCGSTSETLKEFVGREFNDKTLIDIGLRVQHFCRAGKIRLFVEKEGKKTKAGKILVSGIQVIQIP.

This sequence to M.jannaschii MJ0575.

This is an uncharacterized protein from Methanocaldococcus jannaschii (strain ATCC 43067 / DSM 2661 / JAL-1 / JCM 10045 / NBRC 100440) (Methanococcus jannaschii).